Here is a 281-residue protein sequence, read N- to C-terminus: NADPH-dependent 7-cyano-7-deazaguanine reductase (281 aa).

87–89 provides a ligand contact to substrate; sequence IES. Residue 89–90 participates in NADPH binding; sequence SK. Catalysis depends on cysteine 188, which acts as the Thioimide intermediate. Aspartate 195 serves as the catalytic Proton donor. Residue 227 to 228 coordinates substrate; the sequence is HE. 256–257 serves as a coordination point for NADPH; it reads RG. The segment at 261–281 is disordered; the sequence is INPYRSTEQAKPDHNHRMARQ. Residues 268–281 show a composition bias toward basic and acidic residues; that stretch reads EQAKPDHNHRMARQ.

The protein belongs to the GTP cyclohydrolase I family. QueF type 2 subfamily. In terms of assembly, homodimer.

The protein resides in the cytoplasm. It catalyses the reaction 7-aminomethyl-7-carbaguanine + 2 NADP(+) = 7-cyano-7-deazaguanine + 2 NADPH + 3 H(+). It functions in the pathway tRNA modification; tRNA-queuosine biosynthesis. In terms of biological role, catalyzes the NADPH-dependent reduction of 7-cyano-7-deazaguanine (preQ0) to 7-aminomethyl-7-deazaguanine (preQ1). The sequence is that of NADPH-dependent 7-cyano-7-deazaguanine reductase from Vibrio vulnificus (strain YJ016).